Consider the following 518-residue polypeptide: Nitrogenase iron-iron protein alpha chain (518 aa).

Cys49, Cys75, and Cys138 together coordinate [8Fe-7S] cluster. 2 residues coordinate [8Fe-9S-C-homocitryl] cluster: Cys257 and His423.

Belongs to the NifD/NifK/NifE/NifN family. Hexamer of two alpha, two beta, and two delta chains. It depends on [8Fe-7S] cluster as a cofactor. [8Fe-9S-C-homocitryl] cluster is required as a cofactor.

The catalysed reaction is N2 + 8 reduced [2Fe-2S]-[ferredoxin] + 16 ATP + 16 H2O = H2 + 8 oxidized [2Fe-2S]-[ferredoxin] + 2 NH4(+) + 16 ADP + 16 phosphate + 6 H(+). This iron-iron protein is part of the nitrogenase complex that catalyzes the key enzymatic reactions in nitrogen fixation. Other nitrogenase complexes utilize a molybdenum-iron protein or a vanadium-iron protein. In Azotobacter vinelandii, this protein is Nitrogenase iron-iron protein alpha chain (anfD).